Consider the following 448-residue polypeptide: Exodeoxyribonuclease 7 large subunit (448 aa).

It belongs to the XseA family. Heterooligomer composed of large and small subunits.

It is found in the cytoplasm. It catalyses the reaction Exonucleolytic cleavage in either 5'- to 3'- or 3'- to 5'-direction to yield nucleoside 5'-phosphates.. Its function is as follows. Bidirectionally degrades single-stranded DNA into large acid-insoluble oligonucleotides, which are then degraded further into small acid-soluble oligonucleotides. This Shewanella baltica (strain OS195) protein is Exodeoxyribonuclease 7 large subunit.